Here is a 428-residue protein sequence, read N- to C-terminus: Adenylosuccinate synthetase (428 aa).

GTP contacts are provided by residues 12–18 (GDEGKGK) and 40–42 (GHT). Asp13 functions as the Proton acceptor in the catalytic mechanism. Mg(2+)-binding residues include Asp13 and Gly40. IMP is bound by residues 13–16 (DEGK), 38–41 (NAGH), Thr130, Arg144, Gln225, Thr240, and Arg304. Catalysis depends on His41, which acts as the Proton donor. 300 to 306 (VTTGRAR) contributes to the substrate binding site. Residues Arg306, 332 to 334 (KID), and 414 to 416 (SVG) each bind GTP.

It belongs to the adenylosuccinate synthetase family. As to quaternary structure, homodimer. The cofactor is Mg(2+).

The protein resides in the cytoplasm. The enzyme catalyses IMP + L-aspartate + GTP = N(6)-(1,2-dicarboxyethyl)-AMP + GDP + phosphate + 2 H(+). The protein operates within purine metabolism; AMP biosynthesis via de novo pathway; AMP from IMP: step 1/2. In terms of biological role, plays an important role in the de novo pathway of purine nucleotide biosynthesis. Catalyzes the first committed step in the biosynthesis of AMP from IMP. This Clostridium kluyveri (strain ATCC 8527 / DSM 555 / NBRC 12016 / NCIMB 10680 / K1) protein is Adenylosuccinate synthetase.